Here is a 427-residue protein sequence, read N- to C-terminus: Trigger factor (427 aa).

The 86-residue stretch at 163–248 (GDVVNLDFDG…INEVKSKEVP (86 aa)) folds into the PPIase FKBP-type domain.

This sequence belongs to the FKBP-type PPIase family. Tig subfamily.

Its subcellular location is the cytoplasm. The enzyme catalyses [protein]-peptidylproline (omega=180) = [protein]-peptidylproline (omega=0). Involved in protein export. Acts as a chaperone by maintaining the newly synthesized protein in an open conformation. Functions as a peptidyl-prolyl cis-trans isomerase. In Macrococcus caseolyticus (strain JCSC5402) (Macrococcoides caseolyticum), this protein is Trigger factor.